We begin with the raw amino-acid sequence, 498 residues long: NADH-quinone oxidoreductase subunit N (498 aa).

Helical transmembrane passes span L10–I30, V44–V64, V68–A88, E109–H129, Y130–Y150, Y164–A184, V207–F227, P239–V259, L273–V293, I301–T321, V328–L348, A377–G397, F412–V434, and L458–I478.

This sequence belongs to the complex I subunit 2 family. NDH-1 is composed of 14 different subunits. Subunits NuoA, H, J, K, L, M, N constitute the membrane sector of the complex.

The protein resides in the cell inner membrane. The catalysed reaction is a quinone + NADH + 5 H(+)(in) = a quinol + NAD(+) + 4 H(+)(out). In terms of biological role, NDH-1 shuttles electrons from NADH, via FMN and iron-sulfur (Fe-S) centers, to quinones in the respiratory chain. The immediate electron acceptor for the enzyme in this species is believed to be ubiquinone. Couples the redox reaction to proton translocation (for every two electrons transferred, four hydrogen ions are translocated across the cytoplasmic membrane), and thus conserves the redox energy in a proton gradient. The polypeptide is NADH-quinone oxidoreductase subunit N (Acinetobacter baumannii (strain AB0057)).